Reading from the N-terminus, the 718-residue chain is Cyclomaltodextrin glucanotransferase (718 aa).

A signal peptide spans 1-34; the sequence is MFQMAKRAFLSTTLTLGLLAGSALPFLPASAVYA. The A1 stretch occupies residues 35–172; that stretch reads DPDTAVTNKQ…GIKIVIDFAP (138 aa). Ca(2+) is bound by residues aspartate 61, asparagine 63, asparagine 66, and asparagine 67. A disulfide bond links cysteine 77 and cysteine 84. Ca(2+) is bound by residues glycine 85 and aspartate 87. Residue 134-135 participates in substrate binding; that stretch reads YW. Residue asparagine 173 participates in Ca(2+) binding. The segment at 173–236 is b; that stretch reads NHTSPAMETD…NLYDLADFNH (64 aa). Histidine 174 provides a ligand contact to substrate. Ca(2+) is bound at residue isoleucine 224. Residues 227-230 and aspartate 230 each bind substrate; that span reads NLYD. Aspartate 233 is a Ca(2+) binding site. The segment at 237–440 is A2; that stretch reads NNATIDKYFK…LRKSNPAIAY (204 aa). Arginine 261 contributes to the substrate binding site. Residue aspartate 263 is the Nucleophile of the active site. Residues 266–267 and histidine 267 each bind substrate; that span reads KH. Histidine 267 serves as a coordination point for Ca(2+). Glutamate 291 acts as the Proton donor in catalysis. The substrate site is built by histidine 361, aspartate 405, and arginine 409. A c region spans residues 441–528; sequence GSTQQRWINN…ATAVWQYTTA (88 aa). A d region spans residues 529-614; the sequence is ETTPTIGHVG…SNAYNNFTIL (86 aa). The 81-residue stretch at 532–612 folds into the IPT/TIG domain; that stretch reads PTIGHVGPVM…VNSNAYNNFT (81 aa). Positions 613-718 constitute a CBM20 domain; that stretch reads ILTGDQVTVR…GTATVTVNWQ (106 aa). The e stretch occupies residues 615–718; that stretch reads TGDQVTVRFV…GTATVTVNWQ (104 aa).

This sequence belongs to the glycosyl hydrolase 13 family. Monomer. Requires Ca(2+) as cofactor.

It localises to the secreted. The enzyme catalyses Cyclizes part of a (1-&gt;4)-alpha-D-glucan chain by formation of a (1-&gt;4)-alpha-D-glucosidic bond.. This is Cyclomaltodextrin glucanotransferase from Niallia circulans (Bacillus circulans).